The chain runs to 185 residues: Ribosome-recycling factor (185 aa).

It belongs to the RRF family.

It is found in the cytoplasm. In terms of biological role, responsible for the release of ribosomes from messenger RNA at the termination of protein biosynthesis. May increase the efficiency of translation by recycling ribosomes from one round of translation to another. The sequence is that of Ribosome-recycling factor from Desulforapulum autotrophicum (strain ATCC 43914 / DSM 3382 / VKM B-1955 / HRM2) (Desulfobacterium autotrophicum).